A 252-amino-acid polypeptide reads, in one-letter code: Adenosylcobinamide-GDP ribazoletransferase (252 aa).

Helical transmembrane passes span 4 to 24 (LFKGLMMSLSMFTIIPMPYVE), 38 to 58 (PIIGLIVGCVWFLGYKLINYL), 60 to 80 (ISIVLKSALIMIIPFIITGML), 113 to 133 (FSVISVIILFFIQFGAVHSFL), 141 to 161 (ILMFLPIISRNIVAYFFITII), 190 to 210 (LVCILFGIILGYIGIVILLIV), and 232 to 252 (VAGFSLVVGELVGLFSACLFT).

Belongs to the CobS family. The cofactor is Mg(2+).

It localises to the cell membrane. The catalysed reaction is alpha-ribazole + adenosylcob(III)inamide-GDP = adenosylcob(III)alamin + GMP + H(+). The enzyme catalyses alpha-ribazole 5'-phosphate + adenosylcob(III)inamide-GDP = adenosylcob(III)alamin 5'-phosphate + GMP + H(+). Its pathway is cofactor biosynthesis; adenosylcobalamin biosynthesis; adenosylcobalamin from cob(II)yrinate a,c-diamide: step 7/7. Its function is as follows. Joins adenosylcobinamide-GDP and alpha-ribazole to generate adenosylcobalamin (Ado-cobalamin). Also synthesizes adenosylcobalamin 5'-phosphate from adenosylcobinamide-GDP and alpha-ribazole 5'-phosphate. The protein is Adenosylcobinamide-GDP ribazoletransferase of Clostridium botulinum (strain Eklund 17B / Type B).